The sequence spans 507 residues: ATP synthase subunit alpha, chloroplastic (507 aa).

170 to 177 (GDRQTGKT) contacts ATP.

It belongs to the ATPase alpha/beta chains family. In terms of assembly, F-type ATPases have 2 components, CF(1) - the catalytic core - and CF(0) - the membrane proton channel. CF(1) has five subunits: alpha(3), beta(3), gamma(1), delta(1), epsilon(1). CF(0) has four main subunits: a, b, b' and c.

The protein resides in the plastid. The protein localises to the chloroplast thylakoid membrane. It carries out the reaction ATP + H2O + 4 H(+)(in) = ADP + phosphate + 5 H(+)(out). In terms of biological role, produces ATP from ADP in the presence of a proton gradient across the membrane. The alpha chain is a regulatory subunit. The polypeptide is ATP synthase subunit alpha, chloroplastic (Tetradesmus obliquus (Green alga)).